Reading from the N-terminus, the 438-residue chain is Serine hydroxymethyltransferase (438 aa).

Residues L119 and 123 to 125 each bind (6S)-5,6,7,8-tetrahydrofolate; that span reads GHL. At K228 the chain carries N6-(pyridoxal phosphate)lysine. 370 to 372 serves as a coordination point for (6S)-5,6,7,8-tetrahydrofolate; sequence SPF.

It belongs to the SHMT family. In terms of assembly, homodimer. It depends on pyridoxal 5'-phosphate as a cofactor.

The protein localises to the cytoplasm. The enzyme catalyses (6R)-5,10-methylene-5,6,7,8-tetrahydrofolate + glycine + H2O = (6S)-5,6,7,8-tetrahydrofolate + L-serine. Its pathway is one-carbon metabolism; tetrahydrofolate interconversion. The protein operates within amino-acid biosynthesis; glycine biosynthesis; glycine from L-serine: step 1/1. In terms of biological role, catalyzes the reversible interconversion of serine and glycine with tetrahydrofolate (THF) serving as the one-carbon carrier. This reaction serves as the major source of one-carbon groups required for the biosynthesis of purines, thymidylate, methionine, and other important biomolecules. Also exhibits THF-independent aldolase activity toward beta-hydroxyamino acids, producing glycine and aldehydes, via a retro-aldol mechanism. This chain is Serine hydroxymethyltransferase, found in Pelodictyon phaeoclathratiforme (strain DSM 5477 / BU-1).